The chain runs to 100 residues: Putative pterin-4-alpha-carbinolamine dehydratase (100 aa).

It belongs to the pterin-4-alpha-carbinolamine dehydratase family.

It carries out the reaction (4aS,6R)-4a-hydroxy-L-erythro-5,6,7,8-tetrahydrobiopterin = (6R)-L-erythro-6,7-dihydrobiopterin + H2O. In Rhodopseudomonas palustris (strain TIE-1), this protein is Putative pterin-4-alpha-carbinolamine dehydratase.